The following is a 376-amino-acid chain: Methionine import ATP-binding protein MetN 2 (376 aa).

Residues 34–273 (VRFINLGKTY…PQHDVSKTLL (240 aa)) enclose the ABC transporter domain. 70 to 77 (GRSGAGKS) contacts ATP.

This sequence belongs to the ABC transporter superfamily. Methionine importer (TC 3.A.1.24) family. The complex is composed of two ATP-binding proteins (MetN), two transmembrane proteins (MetI) and a solute-binding protein (MetQ).

It is found in the cell inner membrane. It catalyses the reaction L-methionine(out) + ATP + H2O = L-methionine(in) + ADP + phosphate + H(+). It carries out the reaction D-methionine(out) + ATP + H2O = D-methionine(in) + ADP + phosphate + H(+). Part of the ABC transporter complex MetNIQ involved in methionine import. Responsible for energy coupling to the transport system. This chain is Methionine import ATP-binding protein MetN 2, found in Pseudomonas savastanoi pv. phaseolicola (strain 1448A / Race 6) (Pseudomonas syringae pv. phaseolicola (strain 1448A / Race 6)).